The following is a 264-amino-acid chain: Apolipoprotein A-I (264 aa).

The first 18 residues, 1–18, serve as a signal peptide directing secretion; the sequence is MRGVLVTLAVLFLTGTQA. Tandem repeats lie at residues 67-88 and 89-110. Residues 67–264 form a 10 X approximate tandem repeats region; that stretch reads LKLADNLDTL…LLDEVQKTMA (198 aa). The stretch at 111–121 is one 3; half-length repeat; it reads KDLEEVKEKIR. 5 consecutive repeat copies span residues 122–143, 144–165, 166–187, 188–209, and 210–231. The stretch at 232 to 242 is one 9; half-length repeat; that stretch reads PLVQEFKERLT. The stretch at 243 to 264 is repeat 10; it reads PYAENLKNRLIDLLDEVQKTMA.

It belongs to the apolipoprotein A1/A4/E family. As to expression, major protein of VLDL, HDL, LDL and in chylomicrons. Expressed in a number of tissues including liver, small intestine, lung, kidney, heart and muscle with highest expression in liver and small intestine.

The protein localises to the secreted. Functionally, participates in the reverse transport of cholesterol from tissues to the liver for excretion by promoting cholesterol efflux from tissues and by acting as a cofactor for the lecithin cholesterol acyltransferase (LCAT). This is Apolipoprotein A-I (APOA1) from Coturnix japonica (Japanese quail).